We begin with the raw amino-acid sequence, 353 residues long: Photosystem II protein D1 (353 aa).

Threonine 2 bears the N-acetylthreonine mark. The residue at position 2 (threonine 2) is a Phosphothreonine. The next 3 membrane-spanning stretches (helical) occupy residues 29–46 (NIGW…TATS), 118–133 (HFLL…EWEL), and 142–156 (WIAV…AATA). Chlorophyll a is bound at residue histidine 118. Tyrosine 126 is a pheophytin a binding site. [CaMn4O5] cluster-binding residues include aspartate 170 and glutamate 189. Residues 197–218 (FHMLGVAGVFGGSLFSAMHGSL) form a helical membrane-spanning segment. Position 198 (histidine 198) interacts with chlorophyll a. Residues histidine 215 and 264–265 (SF) each bind a quinone. Histidine 215 lines the Fe cation pocket. Residue histidine 272 coordinates Fe cation. A helical membrane pass occupies residues 274–288 (FLAAWPVVGIWFTAL). Positions 332, 333, 342, and 344 each coordinate [CaMn4O5] cluster. Residues 345-353 (AVEAPAVNG) constitute a propeptide that is removed on maturation.

Belongs to the reaction center PufL/M/PsbA/D family. In terms of assembly, PSII is composed of 1 copy each of membrane proteins PsbA, PsbB, PsbC, PsbD, PsbE, PsbF, PsbH, PsbI, PsbJ, PsbK, PsbL, PsbM, PsbT, PsbX, PsbY, PsbZ, Psb30/Ycf12, at least 3 peripheral proteins of the oxygen-evolving complex and a large number of cofactors. It forms dimeric complexes. The D1/D2 heterodimer binds P680, chlorophylls that are the primary electron donor of PSII, and subsequent electron acceptors. It shares a non-heme iron and each subunit binds pheophytin, quinone, additional chlorophylls, carotenoids and lipids. D1 provides most of the ligands for the Mn4-Ca-O5 cluster of the oxygen-evolving complex (OEC). There is also a Cl(-1) ion associated with D1 and D2, which is required for oxygen evolution. The PSII complex binds additional chlorophylls, carotenoids and specific lipids. serves as cofactor. In terms of processing, tyr-161 forms a radical intermediate that is referred to as redox-active TyrZ, YZ or Y-Z. Post-translationally, C-terminally processed by CTPA; processing is essential to allow assembly of the oxygen-evolving complex and thus photosynthetic growth.

It is found in the plastid. Its subcellular location is the chloroplast thylakoid membrane. It carries out the reaction 2 a plastoquinone + 4 hnu + 2 H2O = 2 a plastoquinol + O2. Photosystem II (PSII) is a light-driven water:plastoquinone oxidoreductase that uses light energy to abstract electrons from H(2)O, generating O(2) and a proton gradient subsequently used for ATP formation. It consists of a core antenna complex that captures photons, and an electron transfer chain that converts photonic excitation into a charge separation. The D1/D2 (PsbA/PsbD) reaction center heterodimer binds P680, the primary electron donor of PSII as well as several subsequent electron acceptors. This Dumortiera hirsuta (Liverwort) protein is Photosystem II protein D1.